The primary structure comprises 96 residues: Seed trypsin/chymotrypsin inhibitor IVA (96 aa).

Residues 1-10 form the signal peptide; sequence LSFAANVVNA. A propeptide spanning residues 11–24 is cleaved from the precursor; it reads RFDSTSFITQVLSN. Cystine bridges form between cysteine 32–cysteine 85, cysteine 33–cysteine 48, cysteine 36–cysteine 81, cysteine 38–cysteine 46, cysteine 55–cysteine 62, cysteine 59–cysteine 74, and cysteine 64–cysteine 72. A propeptide spans 88–96 (removed in PSTI I); sequence SEVEEVIKN.

It belongs to the Bowman-Birk serine protease inhibitor family. In terms of tissue distribution, seed.

Functionally, inhibitor of trypsin and of chymotrypsin. May function as a natural phytochemical defense against predators. The protein is Seed trypsin/chymotrypsin inhibitor IVA (TI1236) of Pisum sativum (Garden pea).